Reading from the N-terminus, the 40-residue chain is Alpha-conotoxin-like Lp1.6b (40 aa).

Positions 1–23 (VVLGPASDGRNAAANNKASDLIR) are excised as a propeptide. Gln-24 bears the Pyrrolidone carboxylic acid mark. Intrachain disulfides connect Cys-26-Cys-32 and Cys-27-Cys-39.

This sequence belongs to the conotoxin A superfamily. Expressed by the venom duct.

The protein resides in the secreted. Alpha-conotoxins act on postsynaptic membranes, they bind to the nicotinic acetylcholine receptors (nAChR) and thus inhibit them. This Conus leopardus (Leopard cone) protein is Alpha-conotoxin-like Lp1.6b.